A 407-amino-acid chain; its full sequence is MRPWTLAVTKWPPSAPVGHWRVSTRLSSSPGQLWGRPSNLSVEEHRASAPAGRSPRMLHPATQQSPFMVDLHEQVHQGPVPLSYTVTTVTTQGFPLPTSQHIPGCSAQQLPACSVMFSGQHYPLCCLPPPQLIQACTMQQLPGPYHTYPHLISSDHYILHPPPPAPPPQPTHMAPLGQFVSLQTQHPRMPLQRLDNEMDLRGDQHPLGSFTYSTSATGPALSPSVPLHYLPHDPLHQELSFGVPYSHMMPRRLSTQRYRLQQPLPPPPPPPPPSYYPSFLPYFLSMLPMSPTTVGPTISLDLDVDDVEMENYEALLNLAERLGDAKPRGLTKADIEQLPSYRFNPDSHQSEQTLCVVCFSDFEVRQLLRVLPCNHEFHAKCVDKWLKANRTCPICRADASEVPREAE.

Positions 26–58 are disordered; it reads LSSSPGQLWGRPSNLSVEEHRASAPAGRSPRML. The RING-type; atypical zinc-finger motif lies at 355-396; sequence CVVCFSDFEVRQLLRVLPCNHEFHAKCVDKWLKANRTCPICR.

The protein is RING finger protein 44 (Rnf44) of Mus musculus (Mouse).